The sequence spans 390 residues: S-adenosylmethionine synthase 1 (390 aa).

E9 is a Mg(2+) binding site. H15 is a binding site for ATP. E43 serves as a coordination point for K(+). L-methionine-binding residues include E56 and Q99. ATP-binding positions include 167–169 (DGK), 235–238 (SGRF), D246, 252–253 (RK), A269, K273, and K277. D246 contributes to the L-methionine binding site. K277 provides a ligand contact to L-methionine.

It belongs to the AdoMet synthase family. Homotetramer. Mn(2+) serves as cofactor. It depends on Mg(2+) as a cofactor. Requires Co(2+) as cofactor. The cofactor is K(+).

The protein localises to the cytoplasm. The enzyme catalyses L-methionine + ATP + H2O = S-adenosyl-L-methionine + phosphate + diphosphate. It participates in amino-acid biosynthesis; S-adenosyl-L-methionine biosynthesis; S-adenosyl-L-methionine from L-methionine: step 1/1. Catalyzes the formation of S-adenosylmethionine from methionine and ATP. The reaction comprises two steps that are both catalyzed by the same enzyme: formation of S-adenosylmethionine (AdoMet) and triphosphate, and subsequent hydrolysis of the triphosphate. This chain is S-adenosylmethionine synthase 1 (SAM1), found in Actinidia chinensis var. chinensis (Chinese soft-hair kiwi).